Here is a 1104-residue protein sequence, read N- to C-terminus: Lon protease homolog, mitochondrial (1104 aa).

A mitochondrion-targeting transit peptide spans 1-58 (MLPLRAFARLAQRPRLSRPTQLARSSLPRPSPSRPAAHYLALAPAPSTRFLHSSPPVL). Residues 8-144 (ARLAQRPRLS…PGAGGPKEVA (137 aa)) form a disordered region. A compositionally biased stretch (low complexity) spans 22–46 (LARSSLPRPSPSRPAAHYLALAPAP). The span at 80 to 103 (KQDDQVEKPLPDAESSKSAEERAK) shows a compositional bias: basic and acidic residues. Residues 104–128 (SQSSKPDIKASSSDSVSSSAPAPGS) are compositionally biased toward low complexity. Positions 129–139 (ADGGSPPGAGG) are enriched in gly residues. One can recognise a Lon N-terminal domain in the interval 155-444 (VLAIPITHRP…RALVLLKKEL (290 aa)). 597-604 (GPPGVGKT) lines the ATP pocket. The Lon proteolytic domain maps to 895 to 1082 (SPPAGVSTGL…RQVLHEAFRG (188 aa)). Active-site residues include Ser-987 and Lys-1030.

It belongs to the peptidase S16 family. In terms of assembly, homohexamer or homoheptamer. Organized in a ring with a central cavity.

It localises to the mitochondrion matrix. The enzyme catalyses Hydrolysis of proteins in presence of ATP.. ATP-dependent serine protease that mediates the selective degradation of misfolded, unassembled or oxidatively damaged polypeptides as well as certain short-lived regulatory proteins in the mitochondrial matrix. May also have a chaperone function in the assembly of inner membrane protein complexes. Participates in the regulation of mitochondrial gene expression and in the maintenance of the integrity of the mitochondrial genome. Binds to mitochondrial DNA in a site-specific manner. This Cryptococcus neoformans var. neoformans serotype D (strain B-3501A) (Filobasidiella neoformans) protein is Lon protease homolog, mitochondrial.